Reading from the N-terminus, the 403-residue chain is MHIVFSVDDLTESFWPVPAPAPSPGSSSTPSPTQNVADGMTRSQSEWAFHRLINELSGSDSSPTTNTIERSPPPVQSLSRLEETVDETEDVVEIQKPQNHRRLPVDDQGKNRNRAPSSDPVDSSAPVVVDPNQYHAILKSKLELACAAVARRVGTVKPEDSSASASNQKQAQGSIVAQTSPGASSVRFSPTTSTQKKPDVPARQTSISSRDDSDDDDLDGDADNGDPTDVKRARRMLSNRESARRSRRRKQEQMNEFDTQVGQLRAEHSTLINRLSDMNHKYDAAAVDNRILRADIETLRTKVKMAEETVKRVTGVNPLHWSRPNMGIPFSNTPSASSSIPPNSNHILKPANSSTNTSAGLAQNQRVETANFLPEQVNREGMQNPFAPDSNLYETLPHWNHKH.

Disordered stretches follow at residues 13-128 (SFWP…APVV) and 156-259 (VKPE…EFDT). The segment covering 24-33 (PGSSSTPSPT) has biased composition (low complexity). Residues 56–69 (LSGSDSSPTTNTIE) are compositionally biased toward polar residues. Low complexity-rich tracts occupy residues 115–128 (APSSDPVDSSAPVV) and 161–174 (SSASASNQKQAQGS). Residues 175 to 195 (IVAQTSPGASSVRFSPTTSTQ) are compositionally biased toward polar residues. The segment covering 212–226 (DSDDDDLDGDADNGD) has biased composition (acidic residues). Position 213 is a phosphoserine (S213). The bZIP domain maps to 229-292 (DVKRARRMLS…DAAAVDNRIL (64 aa)). A basic motif region spans residues 231-250 (KRARRMLSNRESARRSRRRK). The short motif at 233–240 (ARRMLSNR) is the Nuclear localization signal element. The leucine-zipper stretch occupies residues 264–271 (LRAEHSTL). Residues 332 to 345 (NTPSASSSIPPNSN) are compositionally biased toward low complexity. Disordered regions lie at residues 332–361 (NTPSASSSIPPNSNHILKPANSSTNTSAGL) and 380–403 (EGMQNPFAPDSNLYETLPHWNHKH). Residues 351-361 (ANSSTNTSAGL) are compositionally biased toward polar residues.

Belongs to the bZIP family. Homodimer. Forms a heterodimer with BZIP1, BZIP1, BZIP2, BZIP9, BZIP11, BZIP44, BZIP53 and BZIP63. Interacts with ABI3 and forms a complex made of ABI3, BZIP53 and BZIP25. Expressed in roots, shoots, stems, leaves, stipulae, siliques, seeds, pollen, and flowers.

It localises to the nucleus. Its function is as follows. Transcription factor that binds to the 5'-ACGT-3' box, especially present in G-box-like motif (5'-CCACGTGGCC-3'), ABRE elements, of seed storage protein (SSP) encoding gene promoters (e.g. At2S and CRU3) and promotes their expression in seeds when in complex with ABI3 and BZIP53. The sequence is that of Basic leucine zipper 25 (BZIP25) from Arabidopsis thaliana (Mouse-ear cress).